We begin with the raw amino-acid sequence, 612 residues long: UvrABC system protein C (612 aa).

The 80-residue stretch at 13-92 (AKPGVYIMHD…IKEHRPKYNT (80 aa)) folds into the GIY-YIG domain. The UVR domain occupies 204–239 (KKIMDRLTTQMQEASEKMEYEEAARYRDLLMSVKQV).

This sequence belongs to the UvrC family. In terms of assembly, interacts with UvrB in an incision complex.

It localises to the cytoplasm. Functionally, the UvrABC repair system catalyzes the recognition and processing of DNA lesions. UvrC both incises the 5' and 3' sides of the lesion. The N-terminal half is responsible for the 3' incision and the C-terminal half is responsible for the 5' incision. This is UvrABC system protein C from Lachnospira eligens (strain ATCC 27750 / DSM 3376 / VPI C15-48 / C15-B4) (Eubacterium eligens).